A 394-amino-acid polypeptide reads, in one-letter code: Putative nickel insertion protein (394 aa).

The protein belongs to the LarC family.

The polypeptide is Putative nickel insertion protein (Syntrophotalea carbinolica (strain DSM 2380 / NBRC 103641 / GraBd1) (Pelobacter carbinolicus)).